The sequence spans 131 residues: Increased copper sensitivity protein 3 (131 aa).

Transmembrane regions (helical) follow at residues 35-55 (ISVL…IFFS) and 74-94 (IALT…IIAF).

It localises to the membrane. In Saccharomyces cerevisiae (strain ATCC 204508 / S288c) (Baker's yeast), this protein is Increased copper sensitivity protein 3 (ICS3).